A 184-amino-acid polypeptide reads, in one-letter code: Large ribosomal subunit protein uL6 (184 aa).

It belongs to the universal ribosomal protein uL6 family. In terms of assembly, part of the 50S ribosomal subunit.

In terms of biological role, this protein binds to the 23S rRNA, and is important in its secondary structure. It is located near the subunit interface in the base of the L7/L12 stalk, and near the tRNA binding site of the peptidyltransferase center. This chain is Large ribosomal subunit protein uL6, found in Thermotoga petrophila (strain ATCC BAA-488 / DSM 13995 / JCM 10881 / RKU-1).